A 78-amino-acid chain; its full sequence is Acyl carrier protein (78 aa).

One can recognise a Carrier domain in the interval 2 to 77 (SDSAEKVKKI…DAIDYIEANK (76 aa)). Serine 37 carries the post-translational modification O-(pantetheine 4'-phosphoryl)serine.

This sequence belongs to the acyl carrier protein (ACP) family. In terms of processing, 4'-phosphopantetheine is transferred from CoA to a specific serine of apo-ACP by AcpS. This modification is essential for activity because fatty acids are bound in thioester linkage to the sulfhydryl of the prosthetic group.

It localises to the cytoplasm. It functions in the pathway lipid metabolism; fatty acid biosynthesis. Carrier of the growing fatty acid chain in fatty acid biosynthesis. This Sphingopyxis alaskensis (strain DSM 13593 / LMG 18877 / RB2256) (Sphingomonas alaskensis) protein is Acyl carrier protein.